A 138-amino-acid polypeptide reads, in one-letter code: MRPTADSFRLKKGNVFPNFDPCAQALQKSCHFALSFLIGKMGIIILSVCLICTRLLQEGIAQSKCLINVSFSLYSCFIVFVTISQDSETLSLDCDHRLFFSLPFTDPASGGQSQHSWPCPERSKNLPQVSKQLRNRAG.

2 helical membrane-spanning segments follow: residues 32 to 52 (FALS…CLIC) and 65 to 85 (CLIN…TISQ). A disordered region spans residues 109 to 138 (SGGQSQHSWPCPERSKNLPQVSKQLRNRAG).

It is found in the membrane. The sequence is that of Putative protein encoded by LINC02912 from Homo sapiens (Human).